We begin with the raw amino-acid sequence, 254 residues long: 3-deoxy-manno-octulosonate cytidylyltransferase (254 aa).

The protein belongs to the KdsB family.

It localises to the cytoplasm. It carries out the reaction 3-deoxy-alpha-D-manno-oct-2-ulosonate + CTP = CMP-3-deoxy-beta-D-manno-octulosonate + diphosphate. It functions in the pathway nucleotide-sugar biosynthesis; CMP-3-deoxy-D-manno-octulosonate biosynthesis; CMP-3-deoxy-D-manno-octulosonate from 3-deoxy-D-manno-octulosonate and CTP: step 1/1. It participates in bacterial outer membrane biogenesis; lipopolysaccharide biosynthesis. Its function is as follows. Activates KDO (a required 8-carbon sugar) for incorporation into bacterial lipopolysaccharide in Gram-negative bacteria. The polypeptide is 3-deoxy-manno-octulosonate cytidylyltransferase (Chlamydia trachomatis serovar A (strain ATCC VR-571B / DSM 19440 / HAR-13)).